A 288-amino-acid polypeptide reads, in one-letter code: MKRARLIIITGLSGSGKTTAARALEDEGFFVVDNLPLVLLPEFLKLHAGSAVAGSNVAVVVDVRNKPYLEGYKQTLAEVRSAGHVVDIFFFDAVDDVLLRRYSETRRRHPLSQKEGVAESIRQERALLGGIMDLSTEIIDSSWLTPHQLRARVVHMVCGDDKGNPLAVLVQSFGYRYGIPQGSDLVMDVRFLPNPHFVPDLRPQTGLSQGVRDFVLGQPACREFLDRFNHLLDYLLPSYRKEGKSYLTISIGCTGGRHRSVAIAEHLRYAIQGEDMVVDGLHRDVAKE.

An ATP-binding site is contributed by 11 to 18 (GLSGSGKT). 62–65 (DVRN) contributes to the GTP binding site.

It belongs to the RapZ-like family.

Its function is as follows. Displays ATPase and GTPase activities. The polypeptide is Nucleotide-binding protein Pcar_1935 (Syntrophotalea carbinolica (strain DSM 2380 / NBRC 103641 / GraBd1) (Pelobacter carbinolicus)).